The sequence spans 489 residues: Trehalose-6-phosphate synthase (489 aa).

Arg-22 lines the D-glucose 6-phosphate pocket. 42-43 (GG) contacts UDP-alpha-D-glucose. Tyr-94 and Asp-148 together coordinate D-glucose 6-phosphate. The UDP-alpha-D-glucose site is built by Arg-290 and Lys-295. Arg-328 is a D-glucose 6-phosphate binding site. 393–397 (LVAKE) serves as a coordination point for UDP-alpha-D-glucose.

The protein belongs to the glycosyltransferase 20 family. As to quaternary structure, homotetramer.

It carries out the reaction ADP-alpha-D-glucose + D-glucose 6-phosphate = alpha,alpha-trehalose 6-phosphate + ADP + H(+). The catalysed reaction is CDP-alpha-D-glucose + D-glucose 6-phosphate = alpha,alpha-trehalose 6-phosphate + CDP + H(+). The enzyme catalyses GDP-alpha-D-glucose + D-glucose 6-phosphate = alpha,alpha-trehalose 6-phosphate + GDP + H(+). It catalyses the reaction TDP-alpha-D-glucose + D-glucose 6-phosphate = 5-methyl-UDP + alpha,alpha-trehalose 6-phosphate + H(+). It carries out the reaction D-glucose 6-phosphate + UDP-alpha-D-glucose = alpha,alpha-trehalose 6-phosphate + UDP + H(+). The protein operates within glycan biosynthesis; trehalose biosynthesis. Its function is as follows. Probably involved in the osmoprotection via the biosynthesis of trehalose and in the production of glycogen and alpha-glucan via the TreS-Pep2 branch involved in the biosynthesis of maltose-1-phosphate (M1P). Catalyzes the transfer of glucose from UDP-glucose (UDP-Glc) to D-glucose 6-phosphate (Glc-6-P) to form trehalose-6-phosphate. Probably also able to use ADP-Glc, CDP-Glc, GDP-Glc and TDP-Glc as glucosyl donors. This is Trehalose-6-phosphate synthase from Mycobacterium sp. (strain KMS).